Consider the following 660-residue polypeptide: Bifunctional polymyxin resistance protein ArnA (660 aa).

Residues 1–304 form a formyltransferase ArnAFT region; that stretch reads MKTVVFAYHD…TLGLVQGSRL (304 aa). 86 to 88 contributes to the (6R)-10-formyltetrahydrofolate binding site; that stretch reads HLI. Histidine 104 serves as the catalytic Proton donor; for formyltransferase activity. (6R)-10-formyltetrahydrofolate-binding positions include arginine 114 and 136–140; that span reads VKRAD. The dehydrogenase ArnADH stretch occupies residues 314 to 660; it reads RRTRVLILGV…RTVDLTDKPS (347 aa). Residues aspartate 347 and 368–369 contribute to the NAD(+) site; that span reads DI. Residues alanine 393, tyrosine 398, and 432-433 each bind UDP-alpha-D-glucuronate; that span reads TS. Catalysis depends on glutamate 434, which acts as the Proton acceptor; for decarboxylase activity. UDP-alpha-D-glucuronate-binding positions include arginine 460, asparagine 492, 526–535, and tyrosine 613; that span reads KLIDGGKQKR. Arginine 619 functions as the Proton donor; for decarboxylase activity in the catalytic mechanism.

This sequence in the N-terminal section; belongs to the Fmt family. UDP-L-Ara4N formyltransferase subfamily. In the C-terminal section; belongs to the NAD(P)-dependent epimerase/dehydratase family. UDP-glucuronic acid decarboxylase subfamily. Homohexamer, formed by a dimer of trimers.

The catalysed reaction is UDP-alpha-D-glucuronate + NAD(+) = UDP-beta-L-threo-pentopyranos-4-ulose + CO2 + NADH. It carries out the reaction UDP-4-amino-4-deoxy-beta-L-arabinose + (6R)-10-formyltetrahydrofolate = UDP-4-deoxy-4-formamido-beta-L-arabinose + (6S)-5,6,7,8-tetrahydrofolate + H(+). It functions in the pathway nucleotide-sugar biosynthesis; UDP-4-deoxy-4-formamido-beta-L-arabinose biosynthesis; UDP-4-deoxy-4-formamido-beta-L-arabinose from UDP-alpha-D-glucuronate: step 1/3. It participates in nucleotide-sugar biosynthesis; UDP-4-deoxy-4-formamido-beta-L-arabinose biosynthesis; UDP-4-deoxy-4-formamido-beta-L-arabinose from UDP-alpha-D-glucuronate: step 3/3. The protein operates within bacterial outer membrane biogenesis; lipopolysaccharide biosynthesis. In terms of biological role, bifunctional enzyme that catalyzes the oxidative decarboxylation of UDP-glucuronic acid (UDP-GlcUA) to UDP-4-keto-arabinose (UDP-Ara4O) and the addition of a formyl group to UDP-4-amino-4-deoxy-L-arabinose (UDP-L-Ara4N) to form UDP-L-4-formamido-arabinose (UDP-L-Ara4FN). The modified arabinose is attached to lipid A and is required for resistance to polymyxin and cationic antimicrobial peptides. This Escherichia coli O81 (strain ED1a) protein is Bifunctional polymyxin resistance protein ArnA.